The chain runs to 326 residues: Putative ABC transporter ATP-binding protein MA_4020 (326 aa).

The span at Met1–Asn12 shows a compositional bias: polar residues. Residues Met1 to Ala34 form a disordered region. The ABC transporter domain occupies Leu46–Arg281. Gly80–Ser87 provides a ligand contact to ATP.

It belongs to the ABC transporter superfamily.

It is found in the cell membrane. Functionally, probably part of an ABC transporter complex. Responsible for energy coupling to the transport system. The protein is Putative ABC transporter ATP-binding protein MA_4020 of Methanosarcina acetivorans (strain ATCC 35395 / DSM 2834 / JCM 12185 / C2A).